Consider the following 1318-residue polypeptide: Major tegument protein (1318 aa).

The protein belongs to the herpesviridae MTP family. As to quaternary structure, interacts with host DAXX; this interaction disrupts the chromatin remodeling complex ATRX:DAXX and thus allows viral transcription. Interacts with host SMC6; this interaction targets SMC5-SMC6 complex for proteasomal degradation.

The protein resides in the virion tegument. The protein localises to the host nucleus. In terms of biological role, tegument protein that plays a role in the inhibition of host intrinsic defenses to promote viral early gene activation. Interacts with host DAXX and thereby disrupts the complex between DAXX and ATRX. Suppresses the DAXX-ATRX dependent deposition of histone H3.3 on viral chromatin allowing viral transcription. Targets also host SMC5/6 for proteasomal degradation in a CUL7 and calpain-dependent manner to support nuclear membrane-less replication compartment formation and lytic virus replication. This chain is Major tegument protein, found in Homo sapiens (Human).